The primary structure comprises 617 residues: MIPMILYASETGNAQDTAERVARAFRANGRAVTCLPMDQFPISALPHTYLLILLTSTHGRGDPPPAMLPLWTALLRSSLPEDILEDVHFALFGLGDSSYERFCYAGKMLLRRMEQLGATKMGEPAWGDERSPNGIEDAFLPWLQQTLDLYLPYLPLISPTPKIIESTVLPPPIYKISPASTSKSVEHDLSLERLSISFPIPNGKPAPVRVEDQARDKASTSRTKPDDWVWATLKKNIRLTSKDWWQDVREIELEFDDPDTKPYTAGSICSLQPQSREDDVNMFLEMMELTSQADEVVTIESLLDEQPLPSHLPPAGTPTTLRSLLTNHLDIRYSPRKSFFEWLRRLSTNEMERERLDEFISDPDEIHTYATRPSRTIVETLADFRFTRIPMSHILEILPPLRRRQFSIASSWEDHPGKVQLLVALIEYKTNLKIPRKGLCSSWLNGLPVGTRIPIHIASPTLFLPQDPEVPIILVGPGTGVAPMRAFVEIRVRQGAAKNTSLYFGCRSSTTDYFFESEWDVHREKGVKIQVAASRDQEERIYVQHLIKRDKEYVKEWIVDKKGWLFISGSSNAMPREVREAVAWCISKEGAGDMTEEESKAYVEQMFEDKRGGEESW.

The 145-residue stretch at 3 to 147 (PMILYASETG…AFLPWLQQTL (145 aa)) folds into the Flavodoxin-like domain. Residues 9-14 (SETGNA), 56-59 (STHG), 94-103 (LGDSSYERFC), and E129 contribute to the FMN site. Residues 226 to 465 (DDWVWATLKK…HIASPTLFLP (240 aa)) form the FAD-binding FR-type domain. FAD-binding positions include 404 to 407 (RQFS) and 438 to 441 (GLCS). NADP(+) contacts are provided by residues T479, 534-535 (SR), and 540-544 (RIYVQ). W617 serves as a coordination point for FAD.

The protein belongs to the NADPH-dependent diflavin oxidoreductase NDOR1 family. In the N-terminal section; belongs to the flavodoxin family. It in the C-terminal section; belongs to the flavoprotein pyridine nucleotide cytochrome reductase family. Interacts with DRE2; as part of the cytosolic iron-sulfur (Fe-S) protein assembly (CIA) machinery. FAD is required as a cofactor. FMN serves as cofactor.

The protein resides in the cytoplasm. The protein localises to the mitochondrion. The catalysed reaction is 2 oxidized [2Fe-2S]-[protein] + NADPH = 2 reduced [2Fe-2S]-[protein] + NADP(+) + H(+). In terms of biological role, NADPH-dependent reductase which is a central component of the cytosolic iron-sulfur (Fe-S) protein assembly (CIA) machinery. Transfers electrons from NADPH via its FAD and FMN prosthetic groups to the [2Fe-2S] cluster of DRE2, another key component of the CIA machinery. In turn, this reduced cluster provides electrons for assembly of cytosolic iron-sulfur cluster proteins. Positively controls H(2)O(2)-induced cell death. The chain is NADPH-dependent diflavin oxidoreductase 1 from Cryptococcus neoformans var. neoformans serotype D (strain B-3501A) (Filobasidiella neoformans).